A 358-amino-acid chain; its full sequence is MRTPRFRIQAKNVFLTYPKCSIPKEHLLSFIQTLSLQSNPKFIKICRELHQNGEPHLHALIQFEGKITITNNRLFDCVHPSCSTSFHPNIQGAKSSSDVKSYLDKDGDTVEWGQFQIDGRSARGGQQSANDAYAKALNSGSKSEALNVIRELVPKDFVLQFHNLNSNLDRIFQEPPAPYVSPFPCSSFDQVPVEIEEWVADNVRDSAARPWRPNSIVIEGDSRTGKTIWARSLGPHNYLCGHLDLSPKVFNNAAWYNVIDDVDPHYLKHFKEFMGSQRDWQSNTKYGKPVQIKGGIPTIFLCNPGPTSSYKEFLAEEKQEALKAWALKNAIFITLTEPLYSGSNQSHSQTSQEASHPA.

The CRESS-DNA virus Rep endonuclease domain occupies 7–115 (RIQAKNVFLT…DGDTVEWGQF (109 aa)). The RCR-1 signature appears at 14–17 (FLTY). The a divalent metal cation site is built by Glu48, His56, and His58. Residues 56-58 (HLH) carry the RCR-2 motif. Tyr102 serves as the catalytic For DNA cleavage activity. An RCR-3 motif is present at residues 102–105 (YLDK). Residue Asp106 coordinates a divalent metal cation. The binding to RBR1 stretch occupies residues 142–152 (KSEALNVIREL). The oligomerization stretch occupies residues 155-175 (KDFVLQFHNLNSNLDRIFQEP). Residue 220-227 (GDSRTGKT) participates in ATP binding.

The protein belongs to the geminiviridae Rep protein family. In terms of assembly, homooligomer. Interacts with the replication enhancer protein (REn). Interacts with host retinoblastoma-related protein 1 (RBR1), and may thereby induce the transcription of host replicative enzymes even if the cell is not dividing anymore. Interacts with host PCNA. Interacts with host SCE1 protein. The cofactor is Mg(2+). Mn(2+) is required as a cofactor.

It is found in the host nucleus. Its function is as follows. Essential for the replication of viral ssDNA. The closed circular ssDNA genome is first converted to a superhelical dsDNA. Rep binds a specific region at the genome origin of replication. It introduces an endonucleolytic nick within the conserved sequence 5'-TAATATTAC-3' in the intergenic region of the genome present in all geminiviruses, thereby initiating the rolling circle replication (RCR). Following cleavage, binds covalently to the 5'-phosphate of DNA as a tyrosyl ester. The cleavage gives rise to a free 3'-OH that serves as a primer for the cellular DNA polymerase. The polymerase synthesizes the (+) strand DNA by rolling circle mechanism. After one round of replication, a Rep-catalyzed nucleotidyl transfer reaction releases a circular single-stranded virus genome, thereby terminating the replication. Displays origin-specific DNA cleavage, nucleotidyl transferase, ATPase and helicase activities. The protein is Replication-associated protein of Hewittia sublobata (Coralbush).